The chain runs to 891 residues: Bifunctional aldehyde-alcohol dehydrogenase AdhE (891 aa).

An aldehyde dehydrogenase region spans residues 2-440 (AVTNVAELNA…ENVGPKHLIN (439 aa)). Residues 110-115 (IVPTTN), Gly-195, and Gly-213 contribute to the NAD(+) site. Cys-246 acts as the Nucleophile in catalysis. The NAD(+) site is built by Glu-335 and Leu-419. The interval 441–448 (KKTVAKRA) is linker. The tract at residues 449–891 (ENMLWHKLPK…KAEKKAKKSA (443 aa)) is alcohol dehydrogenase. NAD(+)-binding positions include Asp-487, Asp-519, 546–550 (GSPMD), 597–598 (TT), Val-610, Lys-619, and Leu-638. The Fe cation site is built by Asp-653, His-657, His-723, and His-737.

It in the N-terminal section; belongs to the aldehyde dehydrogenase family. This sequence in the C-terminal section; belongs to the iron-containing alcohol dehydrogenase family. Forms long filaments, called spirosomes. The cofactor is Fe(2+).

The catalysed reaction is acetaldehyde + NAD(+) + CoA = acetyl-CoA + NADH + H(+). The enzyme catalyses ethanol + NAD(+) = acetaldehyde + NADH + H(+). It carries out the reaction a primary alcohol + NAD(+) = an aldehyde + NADH + H(+). In terms of biological role, under fermentative conditions, catalyzes the sequential NADH-dependent reduction of acetyl-CoA to acetaldehyde and then to ethanol. Plays an important role in virulence and is critical for proper regulation of virulence gene expression. This chain is Bifunctional aldehyde-alcohol dehydrogenase AdhE, found in Escherichia coli O157:H7.